The primary structure comprises 207 residues: Ribonuclease HII (207 aa).

An RNase H type-2 domain is found at 12–201; sequence ALVAGVDEVG…VRELLDVVSI (190 aa). Aspartate 18, glutamate 19, and aspartate 110 together coordinate a divalent metal cation.

Belongs to the RNase HII family. It depends on Mn(2+) as a cofactor. Mg(2+) is required as a cofactor.

The protein resides in the cytoplasm. It catalyses the reaction Endonucleolytic cleavage to 5'-phosphomonoester.. Functionally, endonuclease that specifically degrades the RNA of RNA-DNA hybrids. This Azotobacter vinelandii (strain DJ / ATCC BAA-1303) protein is Ribonuclease HII.